Consider the following 344-residue polypeptide: Phosphate acyltransferase (344 aa).

This sequence belongs to the PlsX family. In terms of assembly, homodimer. Probably interacts with PlsY.

The protein resides in the cytoplasm. The catalysed reaction is a fatty acyl-[ACP] + phosphate = an acyl phosphate + holo-[ACP]. The protein operates within lipid metabolism; phospholipid metabolism. In terms of biological role, catalyzes the reversible formation of acyl-phosphate (acyl-PO(4)) from acyl-[acyl-carrier-protein] (acyl-ACP). This enzyme utilizes acyl-ACP as fatty acyl donor, but not acyl-CoA. The chain is Phosphate acyltransferase from Blochmanniella floridana.